The chain runs to 161 residues: Allophycocyanin alpha chain (161 aa).

Asn71 carries the post-translational modification N4-methylasparagine. Residue Cys81 participates in (2R,3E)-phycocyanobilin binding.

Belongs to the phycobiliprotein family. As to quaternary structure, heterodimer of an alpha and a beta chain. Contains one covalently linked phycocyanobilin chromophore.

Its subcellular location is the plastid. The protein resides in the chloroplast thylakoid membrane. Functionally, light-harvesting photosynthetic bile pigment-protein from the phycobiliprotein complex. Allophycocyanin has a maximum absorption at approximately 650 nanometers. This is Allophycocyanin alpha chain (apcA) from Cyanidium caldarium (Red alga).